The following is a 111-amino-acid chain: Small ribosomal subunit protein uS10 (111 aa).

The protein belongs to the universal ribosomal protein uS10 family. As to quaternary structure, part of the 30S ribosomal subunit.

Involved in the binding of tRNA to the ribosomes. This is Small ribosomal subunit protein uS10 from Xanthomonas euvesicatoria pv. vesicatoria (strain 85-10) (Xanthomonas campestris pv. vesicatoria).